We begin with the raw amino-acid sequence, 195 residues long: Fe/S biogenesis protein NfuA (195 aa).

Positions 152 and 155 each coordinate [4Fe-4S] cluster.

Belongs to the NfuA family. As to quaternary structure, homodimer. The cofactor is [4Fe-4S] cluster.

Involved in iron-sulfur cluster biogenesis. Binds a 4Fe-4S cluster, can transfer this cluster to apoproteins, and thereby intervenes in the maturation of Fe/S proteins. Could also act as a scaffold/chaperone for damaged Fe/S proteins. In Vibrio cholerae serotype O1 (strain ATCC 39541 / Classical Ogawa 395 / O395), this protein is Fe/S biogenesis protein NfuA.